Reading from the N-terminus, the 184-residue chain is Threonylcarbamoyl-AMP synthase (184 aa).

Positions 1 to 184 constitute a YrdC-like domain; that stretch reads MNNLENIVEQ…IFTQHIFRQG (184 aa).

The protein belongs to the SUA5 family. TsaC subfamily.

The protein localises to the cytoplasm. It catalyses the reaction L-threonine + hydrogencarbonate + ATP = L-threonylcarbamoyladenylate + diphosphate + H2O. Functionally, required for the formation of a threonylcarbamoyl group on adenosine at position 37 (t(6)A37) in tRNAs that read codons beginning with adenine. Catalyzes the conversion of L-threonine, HCO(3)(-)/CO(2) and ATP to give threonylcarbamoyl-AMP (TC-AMP) as the acyladenylate intermediate, with the release of diphosphate. The protein is Threonylcarbamoyl-AMP synthase of Actinobacillus pleuropneumoniae serotype 7 (strain AP76).